The sequence spans 251 residues: Cell division protein ZapD (251 aa).

This sequence belongs to the ZapD family. Interacts with FtsZ.

Its subcellular location is the cytoplasm. Cell division factor that enhances FtsZ-ring assembly. Directly interacts with FtsZ and promotes bundling of FtsZ protofilaments, with a reduction in FtsZ GTPase activity. This chain is Cell division protein ZapD, found in Janthinobacterium sp. (strain Marseille) (Minibacterium massiliensis).